Here is a 186-residue protein sequence, read N- to C-terminus: Ribosome-recycling factor (186 aa).

It belongs to the RRF family.

It localises to the cytoplasm. Responsible for the release of ribosomes from messenger RNA at the termination of protein biosynthesis. May increase the efficiency of translation by recycling ribosomes from one round of translation to another. In Burkholderia mallei (strain NCTC 10247), this protein is Ribosome-recycling factor.